The following is a 68-amino-acid chain: MGKVRTKIVKRTARELLEKYPNLFTRDFEHNKKVVSKLIETKSKKLRNQIAGYITHLVGIKLKRQIQA.

This sequence belongs to the eukaryotic ribosomal protein eS17 family.

The protein is Small ribosomal subunit protein eS17 of Staphylothermus marinus (strain ATCC 43588 / DSM 3639 / JCM 9404 / F1).